Reading from the N-terminus, the 302-residue chain is Aspartate carbamoyltransferase catalytic subunit (302 aa).

Residues Arg51 and Thr52 each coordinate carbamoyl phosphate. L-aspartate is bound at residue Lys80. The carbamoyl phosphate site is built by Arg101, His129, and Gln132. L-aspartate is bound by residues Arg162 and Arg223. Carbamoyl phosphate contacts are provided by Leu261 and Pro262.

The protein belongs to the aspartate/ornithine carbamoyltransferase superfamily. ATCase family. As to quaternary structure, heterododecamer (2C3:3R2) of six catalytic PyrB chains organized as two trimers (C3), and six regulatory PyrI chains organized as three dimers (R2).

The catalysed reaction is carbamoyl phosphate + L-aspartate = N-carbamoyl-L-aspartate + phosphate + H(+). It participates in pyrimidine metabolism; UMP biosynthesis via de novo pathway; (S)-dihydroorotate from bicarbonate: step 2/3. Functionally, catalyzes the condensation of carbamoyl phosphate and aspartate to form carbamoyl aspartate and inorganic phosphate, the committed step in the de novo pyrimidine nucleotide biosynthesis pathway. This Chromobacterium violaceum (strain ATCC 12472 / DSM 30191 / JCM 1249 / CCUG 213 / NBRC 12614 / NCIMB 9131 / NCTC 9757 / MK) protein is Aspartate carbamoyltransferase catalytic subunit.